Reading from the N-terminus, the 498-residue chain is ATP synthase subunit beta, chloroplastic (498 aa).

Position 172–179 (172–179) interacts with ATP; it reads GGAGVGKT.

Belongs to the ATPase alpha/beta chains family. As to quaternary structure, F-type ATPases have 2 components, CF(1) - the catalytic core - and CF(0) - the membrane proton channel. CF(1) has five subunits: alpha(3), beta(3), gamma(1), delta(1), epsilon(1). CF(0) has four main subunits: a(1), b(1), b'(1) and c(9-12).

It localises to the plastid. Its subcellular location is the chloroplast thylakoid membrane. The catalysed reaction is ATP + H2O + 4 H(+)(in) = ADP + phosphate + 5 H(+)(out). In terms of biological role, produces ATP from ADP in the presence of a proton gradient across the membrane. The catalytic sites are hosted primarily by the beta subunits. This chain is ATP synthase subunit beta, chloroplastic, found in Citrus sinensis (Sweet orange).